We begin with the raw amino-acid sequence, 657 residues long: Threonine--tRNA ligase (657 aa).

In terms of domain architecture, TGS spans 7–70 (QQASIAITLP…LCDANIEIVT (64 aa)). Residues 253-555 (DHRKLGTELE…LIEHTAGNFP (303 aa)) are catalytic. Zn(2+) is bound by residues Cys351, His402, and His532.

This sequence belongs to the class-II aminoacyl-tRNA synthetase family. In terms of assembly, homodimer. It depends on Zn(2+) as a cofactor.

The protein resides in the cytoplasm. It carries out the reaction tRNA(Thr) + L-threonine + ATP = L-threonyl-tRNA(Thr) + AMP + diphosphate + H(+). In terms of biological role, catalyzes the attachment of threonine to tRNA(Thr) in a two-step reaction: L-threonine is first activated by ATP to form Thr-AMP and then transferred to the acceptor end of tRNA(Thr). Also edits incorrectly charged L-seryl-tRNA(Thr). The chain is Threonine--tRNA ligase from Chlorobium limicola (strain DSM 245 / NBRC 103803 / 6330).